We begin with the raw amino-acid sequence, 270 residues long: High choriolytic enzyme 1 (270 aa).

The first 20 residues, 1–20 (MNLAPSTCLLLLFLLDIAQA), serve as a signal peptide directing secretion. Residues 21–70 (LPVWDEEGHEEGHEEGDGDDFVDITTRILTSNNNTDQLLLEGDLVAPTNR) constitute a propeptide, activation peptide. The N-linked (GlcNAc...) asparagine glycan is linked to Asn53. In terms of domain architecture, Peptidase M12A spans 71–270 (NAMKCWSSSC…TRINVLYNCR (200 aa)). Disulfide bonds link Cys75/Cys80, Cys120/Cys269, and Cys141/Cys161. Residue His169 participates in Zn(2+) binding. Glu170 is an active-site residue. Zn(2+)-binding residues include His173 and His179.

It depends on Zn(2+) as a cofactor.

The protein localises to the zymogen granule. The enzyme catalyses Hydrolysis of the inner layer of fish egg envelope. Also hydrolysis of casein and small molecule substrates such as succinyl-Leu-Leu-Val-Tyr-|-7-(4-methyl)coumarylamide.. Functionally, participates in the breakdown of the egg envelope, which is derived from the egg extracellular matrix, at the time of hatching. Thus allowing the newly hatched fish to swim free. HCE binds tightly to the egg envelope while it exerts the choriolytic swelling action. This Oryzias latipes (Japanese rice fish) protein is High choriolytic enzyme 1 (hcea).